We begin with the raw amino-acid sequence, 342 residues long: tRNA N6-adenosine threonylcarbamoyltransferase (342 aa).

Residues His119 and His123 each coordinate Fe cation. Residues 142 to 146 (VVSGG), Asp175, Gly188, and Asn282 contribute to the substrate site. Position 310 (Asp310) interacts with Fe cation.

Belongs to the KAE1 / TsaD family. Fe(2+) is required as a cofactor.

Its subcellular location is the cytoplasm. The enzyme catalyses L-threonylcarbamoyladenylate + adenosine(37) in tRNA = N(6)-L-threonylcarbamoyladenosine(37) in tRNA + AMP + H(+). Its function is as follows. Required for the formation of a threonylcarbamoyl group on adenosine at position 37 (t(6)A37) in tRNAs that read codons beginning with adenine. Is involved in the transfer of the threonylcarbamoyl moiety of threonylcarbamoyl-AMP (TC-AMP) to the N6 group of A37, together with TsaE and TsaB. TsaD likely plays a direct catalytic role in this reaction. The protein is tRNA N6-adenosine threonylcarbamoyltransferase of Moorella thermoacetica (strain ATCC 39073 / JCM 9320).